The following is a 197-amino-acid chain: Holliday junction resolvase RecU (197 aa).

The disordered stretch occupies residues 1-21; sequence MVNYPSGVRAGGYPQKKKNQN. Mg(2+) is bound by residues Thr82, Asp84, Asp97, and Gln116.

It belongs to the RecU family. The cofactor is Mg(2+).

Its subcellular location is the cytoplasm. The enzyme catalyses Endonucleolytic cleavage at a junction such as a reciprocal single-stranded crossover between two homologous DNA duplexes (Holliday junction).. Its function is as follows. Endonuclease that resolves Holliday junction intermediates in genetic recombination. Cleaves mobile four-strand junctions by introducing symmetrical nicks in paired strands. Promotes annealing of linear ssDNA with homologous dsDNA. Required for DNA repair, homologous recombination and chromosome segregation. The sequence is that of Holliday junction resolvase RecU from Oenococcus oeni (strain ATCC BAA-331 / PSU-1).